We begin with the raw amino-acid sequence, 717 residues long: RNA helicase NPH-II (717 aa).

One can recognise a Helicase ATP-binding domain in the interval 193 to 384; the sequence is FEIFISKKNC…IYFKNIVEIY (192 aa). An ATP-binding site is contributed by 206 to 213; the sequence is GGTGIGKT. Residues 331–334 carry the DEXH box motif; sequence DEIH. The Helicase C-terminal domain maps to 406–566; sequence ILKNYMPSVG…VFKYNNMDYY (161 aa).

This sequence belongs to the DEAD box helicase family. DEAH subfamily. In terms of assembly, monomer.

It localises to the virion. The catalysed reaction is ATP + H2O = ADP + phosphate + H(+). In terms of biological role, NTP-dependent helicase that catalyzes unidirectional unwinding of 3'tailed duplex RNAs and plays an important role during transcription of early mRNAs, presumably by preventing R-loop formation behind the elongating RNA polymerase. Might also play a role in the export of newly synthesized mRNA chains out of the core into the cytoplasm. Required for replication and propagation of viral particles. This Melanoplus sanguinipes (Migratory grasshopper) protein is RNA helicase NPH-II (NPH2).